The sequence spans 222 residues: Uridine diphosphate glucose pyrophosphatase NUDT14 (222 aa).

The region spanning 38–206 (KTHDSVTILM…DVPKTLGVIF (169 aa)) is the Nudix hydrolase domain. Positions 111-129 (PGLSLEEVACKEAWEECGY) match the Nudix box motif.

It belongs to the Nudix hydrolase family. In terms of assembly, homodimer. Requires Mg(2+) as cofactor.

The protein localises to the cytoplasm. The catalysed reaction is UDP-sugar + H2O = UMP + alpha-D-aldose 1-phosphate.. In terms of biological role, hydrolyzes UDP-glucose to glucose 1-phosphate and UMP and ADP-ribose to ribose 5-phosphate and AMP. The physiological substrate is probably UDP-glucose. Poor activity on other substrates such as ADP-glucose, CDP-glucose, GDP-glucose and GDP-mannose. The protein is Uridine diphosphate glucose pyrophosphatase NUDT14 (NUDT14) of Bos taurus (Bovine).